A 264-amino-acid chain; its full sequence is Apolipoprotein A-I (264 aa).

A signal peptide spans 1–18 (MRGVLVTLAVLFLTGTQA). 2 tandem repeats follow at residues 67 to 88 (LKLA…EDMA) and 89 to 110 (PYYK…AELT). The 10 X approximate tandem repeats stretch occupies residues 67–264 (LKLADNLDTL…FLDELQKSVA (198 aa)). A 3; half-length repeat occupies 111-121 (KDLEEVKEKIR). Repeat copies occupy residues 122–143 (PFLD…QRLT), 144–165 (PVAQ…AKLT), 166–187 (PVAE…KNLA), 188–209 (PYSD…EKGI), and 210–231 (PQAS…EKMT). One copy of the 9; half-length repeat lies at 232-242 (PLVQEFRERLT). Residues 243-264 (PYAENLKNRLISFLDELQKSVA) form repeat 10.

It belongs to the apolipoprotein A1/A4/E family. Homodimer. In terms of tissue distribution, major protein of plasma HDL, also found in chylomicrons.

It localises to the secreted. Its function is as follows. Participates in the reverse transport of cholesterol from tissues to the liver for excretion by promoting cholesterol efflux from tissues and by acting as a cofactor for the lecithin cholesterol acyltransferase (LCAT). The sequence is that of Apolipoprotein A-I (APOA1) from Gallus gallus (Chicken).